A 289-amino-acid polypeptide reads, in one-letter code: Ribosomal protein L11 methyltransferase (289 aa).

4 residues coordinate S-adenosyl-L-methionine: Thr-134, Gly-155, Asp-177, and Asn-225.

It belongs to the methyltransferase superfamily. PrmA family.

It is found in the cytoplasm. The catalysed reaction is L-lysyl-[protein] + 3 S-adenosyl-L-methionine = N(6),N(6),N(6)-trimethyl-L-lysyl-[protein] + 3 S-adenosyl-L-homocysteine + 3 H(+). Functionally, methylates ribosomal protein L11. The sequence is that of Ribosomal protein L11 methyltransferase from Parasynechococcus marenigrum (strain WH8102).